The chain runs to 329 residues: Ribosomal protein L11 methyltransferase (329 aa).

S-adenosyl-L-methionine-binding residues include threonine 177, glycine 198, aspartate 220, and asparagine 264.

This sequence belongs to the methyltransferase superfamily. PrmA family.

It is found in the cytoplasm. The enzyme catalyses L-lysyl-[protein] + 3 S-adenosyl-L-methionine = N(6),N(6),N(6)-trimethyl-L-lysyl-[protein] + 3 S-adenosyl-L-homocysteine + 3 H(+). In terms of biological role, methylates ribosomal protein L11. The polypeptide is Ribosomal protein L11 methyltransferase (Helicobacter pylori (strain J99 / ATCC 700824) (Campylobacter pylori J99)).